Here is a 1227-residue protein sequence, read N- to C-terminus: Multifunctional 2-oxoglutarate metabolism enzyme (1227 aa).

Residues 1 to 41 (MSSSPSPFGQNEWLVEEMYRKFRDDPSSVDPSWHEFLVDYS) are 2-oxoglutarate dehydrogenase E1, N-terminal part. Residues 23–37 (RDDPSSVDPSWHEFL) show a composition bias toward basic and acidic residues. Residues 23-102 (RDDPSSVDPS…SATPAKGDES (80 aa)) form a disordered region. The linker stretch occupies residues 42-88 (PEPTTDSASNGRTTTAAPVTPPTPAPAPAPEPKAAPKPAAKTEAKPA). Residues 43–53 (EPTTDSASNGR) are compositionally biased toward polar residues. Residues 60–76 (VTPPTPAPAPAPEPKAA) are compositionally biased toward pro residues. Residues 88–97 (AKPAKSATPA) are compositionally biased toward low complexity. The segment at 89–335 (KPAKSATPAK…LRTIHQLLLD (247 aa)) is succinyltransferase E2. The active-site Proton acceptor; for succinyltransferase activity is histidine 314. Residues 336–1227 (DDFFDEIFRE…QQEILDTAFG (892 aa)) form a 2-oxoglutarate dehydrogenase E1, C-terminal part region. Arginine 540 serves as a coordination point for thiamine diphosphate. 2-oxoglutarate contacts are provided by histidine 579 and serine 604. Thiamine diphosphate is bound by residues serine 604, leucine 606, aspartate 645, alanine 646, alanine 647, and asparagine 678. Aspartate 645 contacts Mg(2+). 2 residues coordinate Mg(2+): asparagine 678 and isoleucine 680. Residues 783–814 (DISMKEAEDALRDYQGQLERVFNEVRELEKHE) are a coiled coil. Histidine 1020 contacts 2-oxoglutarate. Threonine 1038, arginine 1054, lysine 1089, serine 1092, glutamine 1142, arginine 1149, and arginine 1150 together coordinate acetyl-CoA.

It belongs to the 2-oxoacid dehydrogenase family. Kgd subfamily. In terms of assembly, homodimer. Interacts with the FHA domain of unphosphorylated GarA. The 2-oxoglutarate dehydrogenase (ODH) complex contains multiple copies of three enzymatic components: 2-oxoglutarate dehydrogenase (E1), dihydrolipoamide succinyltransferase (E2) and lipoamide dehydrogenase (E3). The cofactor is Mg(2+). Thiamine diphosphate serves as cofactor.

The catalysed reaction is glyoxylate + 2-oxoglutarate + H(+) = 2-hydroxy-3-oxoadipate + CO2. It catalyses the reaction 2-oxoglutarate + H(+) = succinate semialdehyde + CO2. The enzyme catalyses N(6)-[(R)-lipoyl]-L-lysyl-[protein] + 2-oxoglutarate + H(+) = N(6)-[(R)-S(8)-succinyldihydrolipoyl]-L-lysyl-[protein] + CO2. It carries out the reaction N(6)-[(R)-dihydrolipoyl]-L-lysyl-[protein] + succinyl-CoA = N(6)-[(R)-S(8)-succinyldihydrolipoyl]-L-lysyl-[protein] + CoA. It participates in carbohydrate metabolism; tricarboxylic acid cycle; succinate from 2-oxoglutarate (transferase route): step 1/2. Its pathway is carbohydrate metabolism; tricarboxylic acid cycle; succinyl-CoA from 2-oxoglutarate (dehydrogenase route): step 1/1. Its activity is regulated as follows. Alpha-ketoglutarate dehydrogenase and decarboxylase activities are inhibited by unphosphorylated GarA, and allosterically activated by acetyl-CoA, the main substrate of the TCA cycle. Both the phosphoadenosine and acetyl moieties of acetyl-CoA are important for activation because neither CoA nor the synthetic compound S-(2-acetamidoethyl)-ethanethioate (which mimics the terminal acetyl-phosphopantetheine group of acetyl-CoA) has an activation effect. Its function is as follows. Shows three enzymatic activities that share a first common step, the attack of thiamine-PP on 2-oxoglutarate (alpha-ketoglutarate, KG), leading to the formation of an enamine-thiamine-PP intermediate upon decarboxylation. Thus, displays KGD activity, catalyzing the decarboxylation from five-carbon 2-oxoglutarate to four-carbon succinate semialdehyde (SSA). Also catalyzes C-C bond formation between the activated aldehyde formed after decarboxylation of alpha-ketoglutarate and the carbonyl of glyoxylate (GLX), to yield 2-hydroxy-3-oxoadipate (HOA), which spontaneously decarboxylates to form 5-hydroxylevulinate (HLA). And is also a component of the 2-oxoglutarate dehydrogenase (ODH) complex, that catalyzes the overall conversion of 2-oxoglutarate to succinyl-CoA and CO(2). The KG decarboxylase and KG dehydrogenase reactions provide two alternative, tightly regulated, pathways connecting the oxidative and reductive branches of the TCA cycle. The sequence is that of Multifunctional 2-oxoglutarate metabolism enzyme (kgd) from Mycolicibacterium smegmatis (strain ATCC 700084 / mc(2)155) (Mycobacterium smegmatis).